We begin with the raw amino-acid sequence, 367 residues long: Ribosomal lysine N-methyltransferase 5 (367 aa).

The disordered stretch occupies residues 55-74; the sequence is EGGRKKKRVRRRNKASSVEE. A compositionally biased stretch (basic residues) spans 58 to 68; that stretch reads RKKKRVRRRNK. Residues Trp110, 170 to 172, Asp192, Trp256, and Met288 each bind S-adenosyl-L-methionine; that span reads GAG.

It belongs to the class I-like SAM-binding methyltransferase superfamily. RKM5 family.

S-adenosyl-L-methionine-dependent protein-lysine N-methyltransferase that monomethylates 60S ribosomal protein L1 (RPL1A and RPL1B) at 'Lys-46'. In Saccharomyces cerevisiae (strain AWRI796) (Baker's yeast), this protein is Ribosomal lysine N-methyltransferase 5 (RKM5).